The chain runs to 749 residues: EF-hand domain-containing family member C2 (749 aa).

3 DM10 domains span residues 75 to 182, 226 to 368, and 431 to 538; these read DKQV…RKIG, HGKI…KSKY, and KSNI…EQNT. The EF-hand domain occupies 558–593; it reads GKSRELKQVFKAADSKHTNMVDYNTFRDILMSLTVG.

Microtubule inner protein component of sperm flagellar doublet microtubules. In terms of tissue distribution, expressed in airway epithelial cells.

It is found in the cytoplasm. It localises to the cytoskeleton. Its subcellular location is the cilium axoneme. The protein resides in the flagellum axoneme. Its function is as follows. Microtubule inner protein (MIP) part of the dynein-decorated doublet microtubules (DMTs) in cilia axoneme, which is required for motile cilia beating. This chain is EF-hand domain-containing family member C2, found in Homo sapiens (Human).